The primary structure comprises 94 residues: Selenoprotein K (94 aa).

A helical membrane pass occupies residues 20–42 (LSFITDFFWGIAEFVVLFFRTLL). The segment at 48 to 94 (KRRGYGGSSDSRYDDGRGPPGNPPRRMGRINHLRGPNPPPMAGGUGR) is disordered. Residue U92 is a non-standard amino acid, selenocysteine.

It belongs to the selenoprotein K family. In terms of assembly, interacts with DERL1, DERL2, DERL3 and SELENOS. The SELENOK-SELENOS complex interacts with VCP. Interacts with ZDHHC6. Cleaved by CAPN2/m-calpain in resting macrophages but not in activated macrophages. Macrophage activation up-regulates expression of the calpain inhibitor CAST/calpastatin, resulting in inhibition of CAPN2 activity. Post-translationally, truncated SELENOK proteins produced by failed UGA/Sec decoding are ubiquitinated by the CRL2(KLHDC2) complex, which recognizes the diglycine (Gly-Gly) at the C-terminus of truncated SELENOK proteins.

Its subcellular location is the endoplasmic reticulum membrane. The protein resides in the cell membrane. Its function is as follows. Required for Ca(2+) flux in immune cells and plays a role in T-cell proliferation and in T-cell and neutrophil migration. Involved in endoplasmic reticulum-associated degradation (ERAD) of soluble glycosylated proteins. Required for palmitoylation and cell surface expression of CD36 and involved in macrophage uptake of low-density lipoprotein and in foam cell formation. Together with ZDHHC6, required for palmitoylation of ITPR1 in immune cells, leading to regulate ITPR1 stability and function. Plays a role in protection of cells from ER stress-induced apoptosis. Protects cells from oxidative stress when overexpressed in cardiomyocytes. This is Selenoprotein K from Sus scrofa (Pig).